We begin with the raw amino-acid sequence, 792 residues long: uncharacterized protein (792 aa).

25 tandem repeats follow at residues 91-102, 103-114, 115-126, 127-138, 139-150, 151-162, 163-174, 175-186, 187-198, 199-210, 211-222, 223-234, 235-246, 247-258, 259-270, 271-282, 283-294, 295-306, 307-318, 319-330, 331-342, 343-354, 355-366, 367-378, and 379-390. Residues 91 to 390 are 25 X 12 AA tandem repeat of N-[SV]-[RS]-T-[NS]-A-T-T-T-[AE]-[ST]-[IT]; sequence NSSTNATTTA…STNATTTEST (300 aa). The disordered stretch occupies residues 113–417; the sequence is SINVRTSATT…RFHPVTDINK (305 aa). Residues 118–393 are compositionally biased toward low complexity; that stretch reads TSATTTESTN…ATTTESTNAS (276 aa). Over residues 394–417 the composition is skewed to basic and acidic residues; the sequence is AKEDANKDGNAEDNRFHPVTDINK.

This is an uncharacterized protein from Saccharomyces cerevisiae (strain ATCC 204508 / S288c) (Baker's yeast).